The primary structure comprises 269 residues: Oligoribonuclease, mitochondrial (269 aa).

The region spanning 55-227 (LVWIDCEMTG…SDIKESIAQL (173 aa)) is the Exonuclease domain. The active site involves tyrosine 184. A disordered region spans residues 240-269 (ETESVESIGSEQPESPSSSTSSLKRQRTDF). A compositionally biased stretch (low complexity) spans 245–261 (ESIGSEQPESPSSSTSS).

This sequence belongs to the oligoribonuclease family.

The protein localises to the mitochondrion. Functionally, 3'-to-5' exoribonuclease specific for small oligoribonucleotides. This is Oligoribonuclease, mitochondrial (REX2) from Saccharomyces cerevisiae (strain ATCC 204508 / S288c) (Baker's yeast).